We begin with the raw amino-acid sequence, 434 residues long: Enolase (434 aa).

(2R)-2-phosphoglycerate is bound at residue glutamine 163. The Proton donor role is filled by glutamate 205. Positions 242, 291, and 318 each coordinate Mg(2+). (2R)-2-phosphoglycerate contacts are provided by lysine 343, arginine 372, serine 373, and lysine 394. Lysine 343 serves as the catalytic Proton acceptor.

It belongs to the enolase family. Mg(2+) serves as cofactor.

It localises to the cytoplasm. Its subcellular location is the secreted. The protein resides in the cell surface. It carries out the reaction (2R)-2-phosphoglycerate = phosphoenolpyruvate + H2O. It functions in the pathway carbohydrate degradation; glycolysis; pyruvate from D-glyceraldehyde 3-phosphate: step 4/5. Functionally, catalyzes the reversible conversion of 2-phosphoglycerate (2-PG) into phosphoenolpyruvate (PEP). It is essential for the degradation of carbohydrates via glycolysis. This is Enolase from Streptococcus thermophilus (strain ATCC BAA-491 / LMD-9).